A 139-amino-acid chain; its full sequence is Large-conductance mechanosensitive channel (139 aa).

Helical transmembrane passes span 9-29 (AFAV…GAAF) and 79-99 (IQTV…VKAI).

This sequence belongs to the MscL family. In terms of assembly, homopentamer.

The protein localises to the cell inner membrane. In terms of biological role, channel that opens in response to stretch forces in the membrane lipid bilayer. May participate in the regulation of osmotic pressure changes within the cell. The polypeptide is Large-conductance mechanosensitive channel (Pseudomonas putida (strain W619)).